Reading from the N-terminus, the 294-residue chain is 4-hydroxy-tetrahydrodipicolinate synthase (294 aa).

Residue T44 coordinates pyruvate. Y132 serves as the catalytic Proton donor/acceptor. The active-site Schiff-base intermediate with substrate is K161. I206 provides a ligand contact to pyruvate.

Belongs to the DapA family. As to quaternary structure, homotetramer; dimer of dimers.

Its subcellular location is the cytoplasm. It carries out the reaction L-aspartate 4-semialdehyde + pyruvate = (2S,4S)-4-hydroxy-2,3,4,5-tetrahydrodipicolinate + H2O + H(+). It participates in amino-acid biosynthesis; L-lysine biosynthesis via DAP pathway; (S)-tetrahydrodipicolinate from L-aspartate: step 3/4. Functionally, catalyzes the condensation of (S)-aspartate-beta-semialdehyde [(S)-ASA] and pyruvate to 4-hydroxy-tetrahydrodipicolinate (HTPA). The chain is 4-hydroxy-tetrahydrodipicolinate synthase from Thermotoga sp. (strain RQ2).